Here is a 303-residue protein sequence, read N- to C-terminus: Phytochrome-associated serine/threonine-protein phosphatase 3 (303 aa).

Zn(2+) is bound by residues D50, H52, D78, and N110. The active-site Proton donor is the H111. Positions 160 and 234 each coordinate Zn(2+).

The protein belongs to the PPP phosphatase family. PP-6 (PP-V) subfamily. In terms of assembly, interacts with PHYA and PHYB, mostly when they are phosphorylated and in Pfr forms. Interacts with TAP46. Interacts with NRP. Interacts with PIN1 and PIN2. Interacts with ABI5. Interacts with PIF3 and PIF4. Protein phosphatase 6 (PP6) holoenzyme is a heterotrimeric complex formed by the catalytic subunit FYPP, a SAPS domain-containing subunit (SAL) and a protein phosphatase 2A regulatory subunit A (PP2AA). It depends on Zn(2+) as a cofactor. In terms of tissue distribution, mostly expressed in flowers. Also detected to a lower extent in stems and leaves. Expressed in roots.

It is found in the cytoplasm. It carries out the reaction O-phospho-L-seryl-[protein] + H2O = L-seryl-[protein] + phosphate. It catalyses the reaction O-phospho-L-threonyl-[protein] + H2O = L-threonyl-[protein] + phosphate. Catalytic subunit of protein phosphatase 6 (PP6). Dephosphorylates phosphorylated phytochromes, with a preference toward Pfr forms. Plays a major role in the photoperiodic control of flowering time in long days by modulating phytochrome signals in flowering time control. Involved in the regulation of polar auxin transport in roots. Dephosphorylates directly the auxin efflux carriers PIN1 and PIN2, thus promoting their proper polar localization in root cell plasma membrane. Acts antagonistically with the protein kinase PID to regulate the reversible phosphorylation of PIN and polar targeting, subsequently impacting polar auxin transport and plant development. Involved in the regulation of abscisic acid (ABA) signaling during seed germination and postgermination seedling growth. Functions as a negative regulator of ABA signaling through direct dephosphorylation and destabilization of ABI5 protein. Acts antagonistically with the protein kinase SRK2E/SNRK2.6 to regulate ABI5 phosphorylation and ABA responses. Involved in the regulation of phosphorylation status in hypocotyl phototropism. Involved in the negative regulation of photomorphogenesis by controlling the stability and transcriptional activity of PIF3 and PIF4 proteins in the dark, via the regulation of their phosphorylation status. This chain is Phytochrome-associated serine/threonine-protein phosphatase 3, found in Arabidopsis thaliana (Mouse-ear cress).